Reading from the N-terminus, the 212-residue chain is ATP-dependent dethiobiotin synthetase BioD (212 aa).

13–18 provides a ligand contact to ATP; it reads GIGKTV. Mg(2+) is bound at residue T17. K33 is a catalytic residue. Substrate is bound at residue S37. E100 contacts Mg(2+). ATP contacts are provided by residues 100-103 and 184-186; these read EGAG and PRL.

It belongs to the dethiobiotin synthetase family. In terms of assembly, homodimer. Mg(2+) serves as cofactor.

Its subcellular location is the cytoplasm. It catalyses the reaction (7R,8S)-7,8-diammoniononanoate + CO2 + ATP = (4R,5S)-dethiobiotin + ADP + phosphate + 3 H(+). It functions in the pathway cofactor biosynthesis; biotin biosynthesis; biotin from 7,8-diaminononanoate: step 1/2. Catalyzes a mechanistically unusual reaction, the ATP-dependent insertion of CO2 between the N7 and N8 nitrogen atoms of 7,8-diaminopelargonic acid (DAPA, also called 7,8-diammoniononanoate) to form a ureido ring. The polypeptide is ATP-dependent dethiobiotin synthetase BioD (Agrobacterium fabrum (strain C58 / ATCC 33970) (Agrobacterium tumefaciens (strain C58))).